We begin with the raw amino-acid sequence, 113 residues long: uncharacterized protein (113 aa).

Positions 16 to 70 (LYEYLEPLDLKINELAELLHVHRNSVSALINNNRKLTTEMAFRLAKVFDTTVDFW) constitute an HTH cro/C1-type domain. A DNA-binding region (H-T-H motif) is located at residues 27–46 (INELAELLHVHRNSVSALIN).

It belongs to the VapA/VapI family.

This is an uncharacterized protein from Escherichia coli O6:H1 (strain CFT073 / ATCC 700928 / UPEC).